A 384-amino-acid chain; its full sequence is uncharacterized protein (384 aa).

The segment at 1 to 116 (MTEMPKKKFS…FPAAPPPMDS (116 aa)) is disordered. Composition is skewed to basic and acidic residues over residues 14 to 70 (ARGD…RAGD) and 78 to 95 (RFKD…DRPR). S-adenosyl-L-methionine contacts are provided by G318, I338, and L347.

This sequence belongs to the class IV-like SAM-binding methyltransferase superfamily. RNA methyltransferase TrmH family.

This is an uncharacterized protein from Synechocystis sp. (strain ATCC 27184 / PCC 6803 / Kazusa).